Reading from the N-terminus, the 910-residue chain is Constitutive coactivator of peroxisome proliferator-activated receptor gamma (910 aa).

3 disordered regions span residues 333-416, 443-483, and 863-910; these read SDAE…VPMC, SEPR…ESRQ, and SHHA…WRRY. Basic and acidic residues-rich tracts occupy residues 335-351, 360-375, and 396-411; these read AESR…ESRQ and ESRR…EPRQ. Over residues 872 to 890 the composition is skewed to polar residues; sequence QGSSYHRTGSGYSRSSQGQ. An Omega-N-methylarginine modification is found at arginine 885. Basic and acidic residues predominate over residues 901-910; the sequence is QYEHDQWRRY.

The protein belongs to the constitutive coactivator of PPAR-gamma family. Interacts with ESR1 and RXRA. Interacts with PPARG; in a ligand-independent manner. Widely expressed.

It is found in the nucleus. Functionally, functions as a transactivator of PPARG and ESR1. Functions in adipogenesis through PPARG activation. In Homo sapiens (Human), this protein is Constitutive coactivator of peroxisome proliferator-activated receptor gamma (FAM120B).